Reading from the N-terminus, the 462-residue chain is Argininosuccinate lyase (462 aa).

Belongs to the lyase 1 family. Argininosuccinate lyase subfamily.

It is found in the cytoplasm. It catalyses the reaction 2-(N(omega)-L-arginino)succinate = fumarate + L-arginine. It functions in the pathway amino-acid biosynthesis; L-arginine biosynthesis; L-arginine from L-ornithine and carbamoyl phosphate: step 3/3. In Streptococcus agalactiae serotype III (strain NEM316), this protein is Argininosuccinate lyase.